Reading from the N-terminus, the 185-residue chain is Ribosome-recycling factor (185 aa).

Belongs to the RRF family.

The protein localises to the cytoplasm. Responsible for the release of ribosomes from messenger RNA at the termination of protein biosynthesis. May increase the efficiency of translation by recycling ribosomes from one round of translation to another. This Nocardioides sp. (strain ATCC BAA-499 / JS614) protein is Ribosome-recycling factor.